Reading from the N-terminus, the 387-residue chain is Phosphoglycerate kinase (387 aa).

Substrate contacts are provided by residues 21–23 (DLN), R36, 59–62 (HLGR), R113, and R146. ATP contacts are provided by residues K197, E314, and 340-343 (GGDT).

Belongs to the phosphoglycerate kinase family. Monomer.

The protein resides in the cytoplasm. The enzyme catalyses (2R)-3-phosphoglycerate + ATP = (2R)-3-phospho-glyceroyl phosphate + ADP. The protein operates within carbohydrate degradation; glycolysis; pyruvate from D-glyceraldehyde 3-phosphate: step 2/5. The chain is Phosphoglycerate kinase from Aliivibrio fischeri (strain ATCC 700601 / ES114) (Vibrio fischeri).